Consider the following 591-residue polypeptide: Formate--tetrahydrofolate ligase (591 aa).

ATP is bound at residue 74–81; the sequence is TPLGEGKS.

Belongs to the formate--tetrahydrofolate ligase family.

The enzyme catalyses (6S)-5,6,7,8-tetrahydrofolate + formate + ATP = (6R)-10-formyltetrahydrofolate + ADP + phosphate. Its pathway is one-carbon metabolism; tetrahydrofolate interconversion. This is Formate--tetrahydrofolate ligase from Desulfovibrio desulfuricans (strain ATCC 27774 / DSM 6949 / MB).